The chain runs to 314 residues: MIEIEKPRIETIEISEDAKFGKFVVEPLERGYGTTLGNSLRRILLSSLPGAAVKYIEIEGVLHEFSAIDNVVEDVSTIIMNIKKLALKIYSEEDKTLEIDVRDEGEVTASDITHDSDVEVLNPELKIATVSKGGHLKIRLVANKGRGYALAEQNNTSDLPIGVIPVDSLYSPVERVNYTVENTRVGQSSDFDKLTLDVWTNGSITPQESVSLAAKILTEHLNIFVGLTDEAQNAEIMIEKEEDQKEKVLEMSIEELDLSVRSYNCLKRAGINSVQELADKSEADMMKVRNLGRKSLEEVKYKLEDLGLGLRKED.

The tract at residues 1–228 is alpha N-terminal domain (alpha-NTD); that stretch reads MIEIEKPRIE…EHLNIFVGLT (228 aa). Positions 245-314 are alpha C-terminal domain (alpha-CTD); sequence KEKVLEMSIE…DLGLGLRKED (70 aa).

This sequence belongs to the RNA polymerase alpha chain family. In terms of assembly, homodimer. The RNAP catalytic core consists of 2 alpha, 1 beta, 1 beta' and 1 omega subunit. When a sigma factor is associated with the core the holoenzyme is formed, which can initiate transcription.

The enzyme catalyses RNA(n) + a ribonucleoside 5'-triphosphate = RNA(n+1) + diphosphate. In terms of biological role, DNA-dependent RNA polymerase catalyzes the transcription of DNA into RNA using the four ribonucleoside triphosphates as substrates. This chain is DNA-directed RNA polymerase subunit alpha, found in Staphylococcus haemolyticus (strain JCSC1435).